A 545-amino-acid chain; its full sequence is Membrane protein insertase YidC (545 aa).

A helical transmembrane segment spans residues 6-26; the sequence is NLLLIALLFVSFMIWQAWQTD. The disordered stretch occupies residues 31–54; it reads PVAQTTQQTSNPATGDAASSAVPA. A run of 4 helical transmembrane segments spans residues 342–362, 417–437, 455–475, and 496–516; these read KFIHGFIGNWGFSIIIITFIV, LGGCLPLVIQMPIFLALYYML, LSAQDPYYILPILMGVTMFFI, and PVIFTVFFLWFPSGLVLYYIV.

This sequence belongs to the OXA1/ALB3/YidC family. Type 1 subfamily. In terms of assembly, interacts with the Sec translocase complex via SecD. Specifically interacts with transmembrane segments of nascent integral membrane proteins during membrane integration.

It localises to the cell inner membrane. Required for the insertion and/or proper folding and/or complex formation of integral membrane proteins into the membrane. Involved in integration of membrane proteins that insert both dependently and independently of the Sec translocase complex, as well as at least some lipoproteins. Aids folding of multispanning membrane proteins. In Serratia proteamaculans (strain 568), this protein is Membrane protein insertase YidC.